The primary structure comprises 116 residues: MTHPVITAARFNEAGLIPAIAQQHDTGEVLMMAWMNAESIAESLSTGQVCYFSRSRGKLWRKGESSGHVQRLVEMRLDCDGDTLLLLVEQTGPACHTGAHNCFFRRVTKDGLEEIA.

Residue Asp78 participates in Mg(2+) binding. Cys79 contributes to the Zn(2+) binding site. Positions 80 and 82 each coordinate Mg(2+). The Zn(2+) site is built by Cys95 and Cys102.

It belongs to the PRA-CH family. Homodimer. Mg(2+) serves as cofactor. It depends on Zn(2+) as a cofactor.

The protein resides in the cytoplasm. It carries out the reaction 1-(5-phospho-beta-D-ribosyl)-5'-AMP + H2O = 1-(5-phospho-beta-D-ribosyl)-5-[(5-phospho-beta-D-ribosylamino)methylideneamino]imidazole-4-carboxamide. The protein operates within amino-acid biosynthesis; L-histidine biosynthesis; L-histidine from 5-phospho-alpha-D-ribose 1-diphosphate: step 3/9. Catalyzes the hydrolysis of the adenine ring of phosphoribosyl-AMP. This Acidiphilium cryptum (strain JF-5) protein is Phosphoribosyl-AMP cyclohydrolase.